Here is a 484-residue protein sequence, read N- to C-terminus: Glycogen synthase (484 aa).

Position 20 (Lys20) interacts with ADP-alpha-D-glucose.

It belongs to the glycosyltransferase 1 family. Bacterial/plant glycogen synthase subfamily.

It carries out the reaction [(1-&gt;4)-alpha-D-glucosyl](n) + ADP-alpha-D-glucose = [(1-&gt;4)-alpha-D-glucosyl](n+1) + ADP + H(+). Its pathway is glycan biosynthesis; glycogen biosynthesis. In terms of biological role, synthesizes alpha-1,4-glucan chains using ADP-glucose. The chain is Glycogen synthase from Vibrio atlanticus (strain LGP32) (Vibrio splendidus (strain Mel32)).